Reading from the N-terminus, the 121-residue chain is Large ribosomal subunit protein uL22 (121 aa).

This sequence belongs to the universal ribosomal protein uL22 family. As to quaternary structure, part of the 50S ribosomal subunit.

This protein binds specifically to 23S rRNA; its binding is stimulated by other ribosomal proteins, e.g. L4, L17, and L20. It is important during the early stages of 50S assembly. It makes multiple contacts with different domains of the 23S rRNA in the assembled 50S subunit and ribosome. Its function is as follows. The globular domain of the protein is located near the polypeptide exit tunnel on the outside of the subunit, while an extended beta-hairpin is found that lines the wall of the exit tunnel in the center of the 70S ribosome. This chain is Large ribosomal subunit protein uL22, found in Synechococcus sp. (strain CC9605).